Here is a 245-residue protein sequence, read N- to C-terminus: Transmembrane and ubiquitin-like domain-containing protein 1 (245 aa).

Residues 2–30 form a required to release iHOPS from membranes region; the sequence is ALIEGVGDEVTVLFAVLACLLVLALAWVS. The chain crosses the membrane as a helical span at residues 11 to 31; the sequence is VTVLFAVLACLLVLALAWVST. Residues 33–100 are disordered; it reads TTESTDPQPQ…ASTPPDSPQE (68 aa). A phosphoserine mark is found at Ser73, Ser97, and Ser126. The Ubiquitin-like domain maps to 102-175; that stretch reads LLLRLKFLND…LHCHVSTRVG (74 aa). 2 helical membrane passes run 194-214 and 219-239; these read IGSL…YCQI and FFPL…SLLA.

Interacts with EEF1A1, CAMLG, GRIA2 and GRIP1. Interacts with NPM1 and CDKN2A; TMUB1 can enhance interaction between NPM1 and CDKN2A and is proposed to bridge the proteins; proposed to be mediated by iHOPS. Interacts with TUBG1. Interacts with ERLIN2 and AMFR; TMUB1 promotes the interaction of ERLIN2 with AMFR. Isoform 1 (lHOPS) is processed by regulated intramembrane proteolysis (RIP) in the N-terminus to release iHOPS from membranes. In terms of processing, isoform 2 seems to undergo a selective cleavage in the C-terminal region to release an additional cytoplasmic form. As to expression, expressed in adult brain; at protein level. Isoform 1 (lHOPS) is highly expressed in small intestine, stomach and epididymis. Isoform 2 (sHOPS) and iHOPS are abundantly expressed in brain, liver and adrenal gland.

The protein resides in the membrane. It localises to the postsynaptic cell membrane. It is found in the recycling endosome. The protein localises to the cytoplasm. Its subcellular location is the nucleus. The protein resides in the nucleolus. It localises to the cytoskeleton. It is found in the microtubule organizing center. The protein localises to the centrosome. In terms of biological role, involved in sterol-regulated ubiquitination and degradation of HMG-CoA reductase HMGCR. Involved in positive regulation of AMPA-selective glutamate receptor GRIA2 recycling to the cell surface. Acts as a negative regulator of hepatocyte growth during regeneration. May contribute to the regulation of translation during cell-cycle progression. May contribute to the regulation of cell proliferation. May be involved in centrosome assembly. Modulates stabilization and nucleolar localization of tumor suppressor CDKN2A and enhances association between CDKN2A and NPM1. This chain is Transmembrane and ubiquitin-like domain-containing protein 1 (Tmub1), found in Mus musculus (Mouse).